The sequence spans 64 residues: Neuropeptide-like 4 (64 aa).

A signal peptide spans 1 to 18 (MFKLLVVVFAALFAAALA). 2 propeptides span residues 19 to 40 (VPAPVARANPAPIPIASPEPAP) and 63 to 64 (YG).

The protein resides in the secreted. This is Neuropeptide-like 4 (Nplp4) from Drosophila melanogaster (Fruit fly).